A 931-amino-acid chain; its full sequence is Protocadherin gamma-A4 (931 aa).

Residues 1–28 form the signal peptide; it reads MAAPPARPDHTRLLHICLLLGVLVEIRA. 6 Cadherin domains span residues 29–133, 134–242, 243–347, 348–452, 453–567, and 570–682; these read EQIR…PPSF, GTEQ…APVF, TQPE…APEV, TVTS…PPTF, PHAS…YPTF, and DDST…KPSA. Residues 29 to 692 lie on the Extracellular side of the membrane; the sequence is EQIRYSVFEE…DPDDSGLTLY (664 aa). N-linked (GlcNAc...) asparagine glycosylation is found at N419 and N545. The helical transmembrane segment at 693–713 threads the bilayer; it reads LVVSVAAVSCVFLAFVTVLLA. Over 714 to 931 the chain is Cytoplasmic; it reads LKLRRWHKSR…KKKSGKKEKK (218 aa). 2 disordered regions span residues 801 to 840 and 901 to 931; these read KGDP…WPNN and ATLT…KEKK. The segment covering 805–840 has biased composition (polar residues); that stretch reads NLQQAPPNTDWRFSQAQRPGTSGSQNGDDTGTWPNN. Residues 921-931 show a composition bias toward basic residues; sequence NKKKSGKKEKK.

Its subcellular location is the cell membrane. In terms of biological role, potential calcium-dependent cell-adhesion protein. May be involved in the establishment and maintenance of specific neuronal connections in the brain. The protein is Protocadherin gamma-A4 (PCDHGA4) of Pan troglodytes (Chimpanzee).